A 475-amino-acid polypeptide reads, in one-letter code: Pyruvate kinase (475 aa).

Arginine 36 contacts substrate. 3 residues coordinate K(+): asparagine 38, serine 40, and aspartate 70. ATP is bound at residue 38–41; it reads NFSH. Residues arginine 77 and lysine 158 each contribute to the ATP site. Glutamate 223 provides a ligand contact to Mg(2+). Residues glycine 246, aspartate 247, and threonine 279 each coordinate substrate. Residue aspartate 247 coordinates Mg(2+).

This sequence belongs to the pyruvate kinase family. As to quaternary structure, homotetramer. Requires a divalent metal cation as cofactor.

The catalysed reaction is pyruvate + ATP = phosphoenolpyruvate + ADP + H(+). The protein operates within carbohydrate degradation; glycolysis; pyruvate from D-glyceraldehyde 3-phosphate: step 5/5. This is Pyruvate kinase (pki) from Thermococcus litoralis (strain ATCC 51850 / DSM 5473 / JCM 8560 / NS-C).